Reading from the N-terminus, the 477-residue chain is Glycogen synthase (477 aa).

Position 15 (lysine 15) interacts with ADP-alpha-D-glucose.

Belongs to the glycosyltransferase 1 family. Bacterial/plant glycogen synthase subfamily.

It catalyses the reaction [(1-&gt;4)-alpha-D-glucosyl](n) + ADP-alpha-D-glucose = [(1-&gt;4)-alpha-D-glucosyl](n+1) + ADP + H(+). The protein operates within glycan biosynthesis; glycogen biosynthesis. Its function is as follows. Synthesizes alpha-1,4-glucan chains using ADP-glucose. This Salmonella choleraesuis (strain SC-B67) protein is Glycogen synthase.